The following is a 426-amino-acid chain: Putative glutamate--cysteine ligase 2 (426 aa).

This sequence belongs to the glutamate--cysteine ligase type 2 family. YbdK subfamily.

It carries out the reaction L-cysteine + L-glutamate + ATP = gamma-L-glutamyl-L-cysteine + ADP + phosphate + H(+). ATP-dependent carboxylate-amine ligase which exhibits weak glutamate--cysteine ligase activity. In Bradyrhizobium diazoefficiens (strain JCM 10833 / BCRC 13528 / IAM 13628 / NBRC 14792 / USDA 110), this protein is Putative glutamate--cysteine ligase 2.